The sequence spans 270 residues: Tetraspanin-17 (270 aa).

Over 1 to 19 (MPGKHQQFQDPEVGCCGKY) the chain is Cytoplasmic. A helical membrane pass occupies residues 20-40 (FLFGFNIVFWVLGALFLAIGL). Residues 41–63 (WAWGEKGVLSNISGLTDLGGLDP) are Extracellular-facing. N51 is a glycosylation site (N-linked (GlcNAc...) asparagine). The helical transmembrane segment at 64 to 84 (VWLFVVIGGIMSVLGFAGCIG) threads the bilayer. Topologically, residues 85–94 (ALRENTFLLK) are cytoplasmic. The chain crosses the membrane as a helical span at residues 95 to 115 (FFSVFLGLIFFLELAAGILAF). Residues 116–234 (VFKDWIRDQL…GQFEKWLQDN (119 aa)) lie on the Extracellular side of the membrane. Disulfide bonds link C155-C223, C156-C188, C172-C182, and C189-C202. N171 carries N-linked (GlcNAc...) asparagine glycosylation. A helical membrane pass occupies residues 235–255 (LIVVAGVLVAIALLQICGICL). The Cytoplasmic portion of the chain corresponds to 256-270 (AQNLVSDIEAVKANW).

This sequence belongs to the tetraspanin (TM4SF) family. As to quaternary structure, interacts with ADAM10; the interaction influences ADAM10 substrate specificity, endocytosis and turnover.

The protein localises to the cell membrane. Functionally, part of TspanC8 subgroup, composed of 6 members that interact with the transmembrane metalloprotease ADAM10. This interaction is required for ADAM10 exit from the endoplasmic reticulum and for enzymatic maturation and trafficking to the cell surface as well as substrate specificity. Different TspanC8/ADAM10 complexes have distinct substrates. Seems to regulate VE-cadherin expression in endothelial cells probably through interaction with ADAM10, promoting leukocyte transmigration. In Rattus norvegicus (Rat), this protein is Tetraspanin-17 (Tspan17).